The chain runs to 125 residues: Large ribosomal subunit protein bL12 (125 aa).

This sequence belongs to the bacterial ribosomal protein bL12 family. Homodimer. Part of the ribosomal stalk of the 50S ribosomal subunit. Forms a multimeric L10(L12)X complex, where L10 forms an elongated spine to which 2 to 4 L12 dimers bind in a sequential fashion. Binds GTP-bound translation factors.

Its function is as follows. Forms part of the ribosomal stalk which helps the ribosome interact with GTP-bound translation factors. Is thus essential for accurate translation. The sequence is that of Large ribosomal subunit protein bL12 from Sphingopyxis alaskensis (strain DSM 13593 / LMG 18877 / RB2256) (Sphingomonas alaskensis).